The sequence spans 189 residues: MYKEPLGVKVDFNTGVIPGAKKIVRRLSDMKGYFLDEKSWEELVKKEDPIVYEVYAIEQEEKEGDLNFATTILYPGKVGKEFFFTKGHYHSKKDRAEVYVALKGKGGMLLQTPEGEARWIPMEPGTVVYVPPYWAHRTVNTGDEPFIFLAIYPADAGHDYGTIAERGFSKIVIEENGEVKVVDNPRWKS.

Positions 88, 90, 97, and 136 each coordinate Fe cation.

It belongs to the archaeal-type GPI family. In terms of assembly, homodimer. Fe cation is required as a cofactor.

The protein localises to the cytoplasm. The catalysed reaction is alpha-D-glucose 6-phosphate = beta-D-fructose 6-phosphate. Its pathway is carbohydrate degradation; glycolysis; D-glyceraldehyde 3-phosphate and glycerone phosphate from D-glucose: step 2/4. The polypeptide is Glucose-6-phosphate isomerase (pgiA) (Pyrococcus abyssi (strain GE5 / Orsay)).